The following is a 250-amino-acid chain: Tumor necrosis factor ligand superfamily member 13 (250 aa).

Positions 1–104 are excised as a propeptide; sequence MPASSPFLLA…ENGERSRKRR (104 aa). 2 disordered regions span residues 61 to 82 and 89 to 108; these read EVSR…PWQS and DALE…AVLT. Residues 116 to 250 enclose the THD domain; the sequence is SVLHLVPINA…HGTFLGFVKL (135 aa). N-linked (GlcNAc...) asparagine glycosylation is present at N124. C196 and C211 are oxidised to a cystine.

The protein belongs to the tumor necrosis factor family. Homotrimer. The precursor is cleaved by furin. In terms of tissue distribution, expressed at high levels in transformed cell lines, cancers of colon, thyroid, lymphoid tissues and specifically expressed in monocytes and macrophages.

Its subcellular location is the secreted. In terms of biological role, cytokine that binds to TNFRSF13B/TACI and to TNFRSF17/BCMA. Plays a role in the regulation of tumor cell growth. May be involved in monocyte/macrophage-mediated immunological processes. The sequence is that of Tumor necrosis factor ligand superfamily member 13 (TNFSF13) from Homo sapiens (Human).